The primary structure comprises 354 residues: Uroporphyrinogen decarboxylase (354 aa).

Substrate is bound by residues 27–31 (RQAGR), Asp77, Tyr154, Ser209, and His327.

The protein belongs to the uroporphyrinogen decarboxylase family. In terms of assembly, homodimer.

The protein localises to the cytoplasm. It carries out the reaction uroporphyrinogen III + 4 H(+) = coproporphyrinogen III + 4 CO2. The protein operates within porphyrin-containing compound metabolism; protoporphyrin-IX biosynthesis; coproporphyrinogen-III from 5-aminolevulinate: step 4/4. Functionally, catalyzes the decarboxylation of four acetate groups of uroporphyrinogen-III to yield coproporphyrinogen-III. The protein is Uroporphyrinogen decarboxylase of Teredinibacter turnerae (strain ATCC 39867 / T7901).